An 85-amino-acid chain; its full sequence is Large ribosomal subunit protein bL31B (85 aa).

The protein belongs to the bacterial ribosomal protein bL31 family. Type B subfamily. Part of the 50S ribosomal subunit.

This chain is Large ribosomal subunit protein bL31B, found in Vibrio cholerae serotype O1 (strain ATCC 39541 / Classical Ogawa 395 / O395).